Here is an 876-residue protein sequence, read N- to C-terminus: uncharacterized protein (876 aa).

Residues 37–48 (DEDKSNNDDRRS) are compositionally biased toward basic and acidic residues. Disordered regions lie at residues 37–67 (DEDK…KGSN), 112–155 (DESG…RNIK), 226–254 (KKKS…TKSQ), and 330–353 (MMMD…SRSI). Ser-48 and Ser-51 each carry phosphoserine. Over residues 49–58 (LASILDSSSS) the composition is skewed to low complexity. Positions 115–131 (GFTSDNNADYFSGNSYS) are enriched in polar residues. Ser-360, Ser-510, Ser-552, and Ser-577 each carry phosphoserine. The tract at residues 490-513 (PEVTKQKNTSGPKPGFSHSKSADA) is disordered. Disordered stretches follow at residues 661–728 (ITGG…RSPQ) and 750–876 (RHSL…FGRL). A compositionally biased stretch (basic residues) spans 689-699 (SKSKSRSSSKS). The span at 717–726 (SSASASRSRS) shows a compositional bias: low complexity. Phosphoserine is present on Ser-775. Low complexity-rich tracts occupy residues 794 to 808 (NKDS…SSSL) and 842 to 854 (FSFF…SPSS).

This is an uncharacterized protein from Saccharomyces cerevisiae (strain ATCC 204508 / S288c) (Baker's yeast).